Here is a 440-residue protein sequence, read N- to C-terminus: Enolase (440 aa).

Gln163 serves as a coordination point for (2R)-2-phosphoglycerate. Glu205 (proton donor) is an active-site residue. 3 residues coordinate Mg(2+): Asp242, Glu288, and Asp315. Residues Lys340, Arg369, Ser370, and Lys391 each contribute to the (2R)-2-phosphoglycerate site. Lys340 (proton acceptor) is an active-site residue.

The protein belongs to the enolase family. Mg(2+) is required as a cofactor.

It is found in the cytoplasm. The protein resides in the secreted. It localises to the cell surface. The catalysed reaction is (2R)-2-phosphoglycerate = phosphoenolpyruvate + H2O. It participates in carbohydrate degradation; glycolysis; pyruvate from D-glyceraldehyde 3-phosphate: step 4/5. Functionally, catalyzes the reversible conversion of 2-phosphoglycerate (2-PG) into phosphoenolpyruvate (PEP). It is essential for the degradation of carbohydrates via glycolysis. This chain is Enolase, found in Pediococcus pentosaceus (strain ATCC 25745 / CCUG 21536 / LMG 10740 / 183-1w).